A 312-amino-acid polypeptide reads, in one-letter code: Pantothenate kinase (312 aa).

97–104 (GSVAVGKS) serves as a coordination point for ATP.

The protein belongs to the prokaryotic pantothenate kinase family.

Its subcellular location is the cytoplasm. It catalyses the reaction (R)-pantothenate + ATP = (R)-4'-phosphopantothenate + ADP + H(+). It functions in the pathway cofactor biosynthesis; coenzyme A biosynthesis; CoA from (R)-pantothenate: step 1/5. The chain is Pantothenate kinase from Mycolicibacterium gilvum (strain PYR-GCK) (Mycobacterium gilvum (strain PYR-GCK)).